The primary structure comprises 325 residues: Cytochrome c1, heme protein, mitochondrial (325 aa).

The transit peptide at 1 to 84 directs the protein to the mitochondrion; that stretch reads MAAAAATLRG…AVALHSAVSA (84 aa). Over 85–281 the chain is Mitochondrial intermembrane; that stretch reads SDLELHPPSY…TFLRWAAEPE (197 aa). The region spanning 108–209 is the Cytochrome c domain; the sequence is TSIRRGFQVY…IVRARHGGED (102 aa). Heme c-binding residues include C121, C124, H125, and M244. The helical transmembrane segment at 282–315 threads the bilayer; sequence HDHRKRMGLKMLLMMGLLLPLVYAMKRHKWSVLK. Topologically, residues 316–325 are mitochondrial matrix; sequence SRKLAYRPPK.

Belongs to the cytochrome c family. In terms of assembly, component of the ubiquinol-cytochrome c oxidoreductase (cytochrome b-c1 complex, complex III, CIII), a multisubunit enzyme composed of 11 subunits. The complex is composed of 3 respiratory subunits cytochrome b, cytochrome c1 and Rieske protein UQCRFS1, 2 core protein subunits UQCRC1/QCR1 and UQCRC2/QCR2, and 6 low-molecular weight protein subunits UQCRH/QCR6, UQCRB/QCR7, UQCRQ/QCR8, UQCR10/QCR9, UQCR11/QCR10 and subunit 9, the cleavage product of Rieske protein UQCRFS1. The complex exists as an obligatory dimer and forms supercomplexes (SCs) in the inner mitochondrial membrane with NADH-ubiquinone oxidoreductase (complex I, CI) and cytochrome c oxidase (complex IV, CIV), resulting in different assemblies (supercomplex SCI(1)III(2)IV(1) and megacomplex MCI(2)III(2)IV(2)). Interacts with FLVCR2; this interaction occurs in the absence of heme and is disrupted upon heme binding. The cofactor is heme c.

It localises to the mitochondrion inner membrane. It carries out the reaction a quinol + 2 Fe(III)-[cytochrome c](out) = a quinone + 2 Fe(II)-[cytochrome c](out) + 2 H(+)(out). Component of the ubiquinol-cytochrome c oxidoreductase, a multisubunit transmembrane complex that is part of the mitochondrial electron transport chain which drives oxidative phosphorylation. The respiratory chain contains 3 multisubunit complexes succinate dehydrogenase (complex II, CII), ubiquinol-cytochrome c oxidoreductase (cytochrome b-c1 complex, complex III, CIII) and cytochrome c oxidase (complex IV, CIV), that cooperate to transfer electrons derived from NADH and succinate to molecular oxygen, creating an electrochemical gradient over the inner membrane that drives transmembrane transport and the ATP synthase. The cytochrome b-c1 complex catalyzes electron transfer from ubiquinol to cytochrome c, linking this redox reaction to translocation of protons across the mitochondrial inner membrane, with protons being carried across the membrane as hydrogens on the quinol. In the process called Q cycle, 2 protons are consumed from the matrix, 4 protons are released into the intermembrane space and 2 electrons are passed to cytochrome c. Cytochrome c1 is a catalytic core subunit containing a c-type heme. It transfers electrons from the [2Fe-2S] iron-sulfur cluster of the Rieske protein to cytochrome c. In Bos taurus (Bovine), this protein is Cytochrome c1, heme protein, mitochondrial (CYC1).